A 456-amino-acid polypeptide reads, in one-letter code: Histidine--tRNA ligase (456 aa).

It belongs to the class-II aminoacyl-tRNA synthetase family. As to quaternary structure, homodimer.

It localises to the cytoplasm. It catalyses the reaction tRNA(His) + L-histidine + ATP = L-histidyl-tRNA(His) + AMP + diphosphate + H(+). In Borrelia garinii subsp. bavariensis (strain ATCC BAA-2496 / DSM 23469 / PBi) (Borreliella bavariensis), this protein is Histidine--tRNA ligase.